A 251-amino-acid chain; its full sequence is MEPIIEIENFSAYYGEKIAVKNVTMKIFKNQITAIIGPSGCGKTTLLRSINRMNDHLPGFRVEGKIYFKGQDIYDPQLDVTEYRKRVGMVFQKPTPFPMSIYDNVAFGPRIHGVKSKHILDRIVEESLKKAALWDEVKSELNKSGTRLSGGQQQRLCIARALAVEPEVILLDEPTSALDPIATQRIEKLLEELSENYTIVIVTHNIGQAIRIADYIAFMYRGELIEYGPTREIVERPKNRLTEEYLTGKIG.

The 242-residue stretch at Ile-5–Leu-246 folds into the ABC transporter domain. Gly-37–Thr-44 serves as a coordination point for ATP.

This sequence belongs to the ABC transporter superfamily. Phosphate importer (TC 3.A.1.7) family. As to quaternary structure, the complex is composed of two ATP-binding proteins (PstB), two transmembrane proteins (PstC and PstA) and a solute-binding protein (PstS).

The protein resides in the cell inner membrane. It carries out the reaction phosphate(out) + ATP + H2O = ADP + 2 phosphate(in) + H(+). Part of the ABC transporter complex PstSACB involved in phosphate import. Responsible for energy coupling to the transport system. This chain is Phosphate import ATP-binding protein PstB, found in Thermotoga maritima (strain ATCC 43589 / DSM 3109 / JCM 10099 / NBRC 100826 / MSB8).